The chain runs to 442 residues: Chromosomal replication initiator protein DnaA (442 aa).

The interval 1–68 (MDAWPRCLER…ELLAYFVGNG (68 aa)) is domain I, interacts with DnaA modulators. The domain II stretch occupies residues 68–104 (GDVALAVGSRPRAPEPAPAPVAVPSAPQAAPIVPFAG). Positions 105–322 (NLDSHYTFAN…GALNTLVARA (218 aa)) are domain III, AAA+ region. ATP contacts are provided by Gly-150, Gly-152, Lys-153, and Thr-154. The domain IV, binds dsDNA stretch occupies residues 323–442 (NFTGRSITVE…WEKLIRKLSE (120 aa)).

This sequence belongs to the DnaA family. As to quaternary structure, oligomerizes as a right-handed, spiral filament on DNA at oriC.

It is found in the cytoplasm. Functionally, plays an essential role in the initiation and regulation of chromosomal replication. ATP-DnaA binds to the origin of replication (oriC) to initiate formation of the DNA replication initiation complex once per cell cycle. Binds the DnaA box (a 9 base pair repeat at the origin) and separates the double-stranded (ds)DNA. Forms a right-handed helical filament on oriC DNA; dsDNA binds to the exterior of the filament while single-stranded (ss)DNA is stabiized in the filament's interior. The ATP-DnaA-oriC complex binds and stabilizes one strand of the AT-rich DNA unwinding element (DUE), permitting loading of DNA polymerase. After initiation quickly degrades to an ADP-DnaA complex that is not apt for DNA replication. Binds acidic phospholipids. This Xanthomonas axonopodis pv. citri (strain 306) protein is Chromosomal replication initiator protein DnaA.